A 797-amino-acid chain; its full sequence is Protocadherin beta-11 (797 aa).

An N-terminal signal peptide occupies residues 1–26 (MENQGTRTQQIRQVLLLFVLLGMSQA). Topologically, residues 27-690 (GSETWSFSVA…AQADSLTVYL (664 aa)) are extracellular. 5 Cadherin domains span residues 35-133 (VAEE…SPIF), 138-242 (MLLE…SPEF), 247-347 (YEVK…APEI), 352-451 (ITSP…APTF), and 456-561 (YTLF…SPFV). N-linked (GlcNAc...) asparagine glycans are attached at residues Asn418, Asn436, Asn487, and Asn567. The Cadherin 6 domain occupies 568-671 (GSAPCTELVP…LVDGFSQPYL (104 aa)). A helical membrane pass occupies residues 691–711 (VVALASVSSLFLFSVLLFVAV). The Cytoplasmic portion of the chain corresponds to 712 to 797 (RLCRRSRAAS…TFRNSFGFNF (86 aa)).

The protein localises to the cell membrane. Potential calcium-dependent cell-adhesion protein. May be involved in the establishment and maintenance of specific neuronal connections in the brain. This is Protocadherin beta-11 (PCDHB11) from Homo sapiens (Human).